The primary structure comprises 321 residues: Mas-related G-protein coupled receptor member H (321 aa).

Over 1-35 (MEPLATTLCPQECTQTTRNETPNETTWSSEHVTKY) the chain is Extracellular. N23 is a glycosylation site (N-linked (GlcNAc...) asparagine). The helical transmembrane segment at 36 to 56 (TYISISLVICSLGLVGNGLLI) threads the bilayer. The Cytoplasmic portion of the chain corresponds to 57 to 71 (WFLIFCIKRKPFTIY). A helical transmembrane segment spans residues 72–92 (ILHLAFADFMVLLCSSIIQLV). Residues 93-102 (NTFHIYDSTL) are Extracellular-facing. The helical transmembrane segment at 103–126 (VSYAVLFMIFGYNTGLHLLTAISV) threads the bilayer. The Cytoplasmic segment spans residues 127-147 (ERCLSVLYPIWYHCRRPKHQS). Residues 148–168 (TVACTLLWALSVLVSGLENFF) form a helical membrane-spanning segment. Topologically, residues 169–188 (CILEVKPQFPECRYVYIFSC) are extracellular. The helical transmembrane segment at 189 to 209 (TLTFLVFVPLMVFSNLILFIQ) threads the bilayer. Residues 210 to 225 (VCCNLKPRQPAKLYVI) lie on the Cytoplasmic side of the membrane. The chain crosses the membrane as a helical span at residues 226-246 (IMATVILFLVFAMPMKVLLII). Position 247 (G247) is a topological domain, extracellular. A helical membrane pass occupies residues 248–271 (YYSNSTDASVWKSLPYLNMLSTIN). The Cytoplasmic segment spans residues 272–320 (CSINPIVYFVVGSLRRKRSRKSLKEALQKVFEEKPVVASRENEVQFSLP).

Belongs to the G-protein coupled receptor 1 family. Mas subfamily.

The protein resides in the cell membrane. Its function is as follows. Orphan receptor. May regulate nociceptor function and/or development, including the sensation or modulation of pain. In Rattus norvegicus (Rat), this protein is Mas-related G-protein coupled receptor member H (Mrgprh).